Reading from the N-terminus, the 495-residue chain is Probable histidine ammonia-lyase (495 aa).

The segment at residues 141–143 (ASG) is a cross-link (5-imidazolinone (Ala-Gly)). Ser142 is modified (2,3-didehydroalanine (Ser)).

This sequence belongs to the PAL/histidase family. In terms of processing, contains an active site 4-methylidene-imidazol-5-one (MIO), which is formed autocatalytically by cyclization and dehydration of residues Ala-Ser-Gly.

The protein resides in the cytoplasm. The catalysed reaction is L-histidine = trans-urocanate + NH4(+). It participates in amino-acid degradation; L-histidine degradation into L-glutamate; N-formimidoyl-L-glutamate from L-histidine: step 1/3. The protein is Probable histidine ammonia-lyase of Thermoplasma volcanium (strain ATCC 51530 / DSM 4299 / JCM 9571 / NBRC 15438 / GSS1).